The chain runs to 341 residues: S-adenosylmethionine:tRNA ribosyltransferase-isomerase (341 aa).

It belongs to the QueA family. In terms of assembly, monomer.

The protein resides in the cytoplasm. It carries out the reaction 7-aminomethyl-7-carbaguanosine(34) in tRNA + S-adenosyl-L-methionine = epoxyqueuosine(34) in tRNA + adenine + L-methionine + 2 H(+). Its pathway is tRNA modification; tRNA-queuosine biosynthesis. Transfers and isomerizes the ribose moiety from AdoMet to the 7-aminomethyl group of 7-deazaguanine (preQ1-tRNA) to give epoxyqueuosine (oQ-tRNA). The sequence is that of S-adenosylmethionine:tRNA ribosyltransferase-isomerase from Staphylococcus saprophyticus subsp. saprophyticus (strain ATCC 15305 / DSM 20229 / NCIMB 8711 / NCTC 7292 / S-41).